Reading from the N-terminus, the 583-residue chain is Laccase-21 (583 aa).

The first 29 residues, 1–29, serve as a signal peptide directing secretion; sequence MGIAKIPAVLWLLACAVLTFAVAISPAHG. 2 Plastocyanin-like domains span residues 39–155 and 165–323; these read FITE…PKHG and KEIP…YYTG. Asparagine 85 is a glycosylation site (N-linked (GlcNAc...) asparagine). Cu cation contacts are provided by histidine 89, histidine 91, histidine 134, and histidine 136. N-linked (GlcNAc...) asparagine glycosylation is found at asparagine 282, asparagine 311, asparagine 384, asparagine 387, asparagine 399, asparagine 409, and asparagine 446. Residues 436 to 567 form the Plastocyanin-like 3 domain; sequence FPNNPAPVFV…NTVFIVKDGK (132 aa). Residues histidine 484, histidine 487, histidine 489, histidine 546, cysteine 547, histidine 548, histidine 552, and methionine 557 each contribute to the Cu cation site.

It belongs to the multicopper oxidase family. Cu cation is required as a cofactor.

The protein resides in the secreted. The protein localises to the extracellular space. It localises to the apoplast. It carries out the reaction 4 hydroquinone + O2 = 4 benzosemiquinone + 2 H2O. Functionally, lignin degradation and detoxification of lignin-derived products. The polypeptide is Laccase-21 (LAC21) (Oryza sativa subsp. japonica (Rice)).